A 739-amino-acid polypeptide reads, in one-letter code: Polyribonucleotide nucleotidyltransferase (739 aa).

The Mg(2+) site is built by Asp-514 and Asp-520. A KH domain is found at 580–639 (PRIITVKIPVDKIGEVIGPKGKMINQIQEDTGADITIEDDGTIYIGAAQGSQAEAARATI). Residues 651-723 (GERYLGTVVK…SRGKLSLIPV (73 aa)) form the S1 motif domain.

The protein belongs to the polyribonucleotide nucleotidyltransferase family. Mg(2+) serves as cofactor.

It localises to the cytoplasm. The catalysed reaction is RNA(n+1) + phosphate = RNA(n) + a ribonucleoside 5'-diphosphate. Functionally, involved in mRNA degradation. Catalyzes the phosphorolysis of single-stranded polyribonucleotides processively in the 3'- to 5'-direction. In Streptomyces coelicolor (strain ATCC BAA-471 / A3(2) / M145), this protein is Polyribonucleotide nucleotidyltransferase.